The primary structure comprises 431 residues: Glutamate-1-semialdehyde 2,1-aminomutase (431 aa).

The residue at position 265 (Lys265) is an N6-(pyridoxal phosphate)lysine.

It belongs to the class-III pyridoxal-phosphate-dependent aminotransferase family. HemL subfamily. In terms of assembly, homodimer. The cofactor is pyridoxal 5'-phosphate.

It localises to the cytoplasm. It catalyses the reaction (S)-4-amino-5-oxopentanoate = 5-aminolevulinate. The protein operates within porphyrin-containing compound metabolism; protoporphyrin-IX biosynthesis; 5-aminolevulinate from L-glutamyl-tRNA(Glu): step 2/2. In Vibrio atlanticus (strain LGP32) (Vibrio splendidus (strain Mel32)), this protein is Glutamate-1-semialdehyde 2,1-aminomutase.